A 344-amino-acid polypeptide reads, in one-letter code: DNA integrity scanning protein DisA (344 aa).

Positions 1–133 constitute a DAC domain; sequence MALLAPGTPI…GRRYLIERPE (133 aa). ATP contacts are provided by residues Gly61 and 92 to 96; that span reads TRHRT.

This sequence belongs to the DisA family. As to quaternary structure, homooctamer. It depends on Mg(2+) as a cofactor.

It carries out the reaction 2 ATP = 3',3'-c-di-AMP + 2 diphosphate. Functionally, participates in a DNA-damage check-point. DisA forms globular foci that rapidly scan along the chromosomes searching for lesions. In terms of biological role, also has diadenylate cyclase activity, catalyzing the condensation of 2 ATP molecules into cyclic di-AMP (c-di-AMP). c-di-AMP likely acts as a signaling molecule that may couple DNA integrity with a cellular process. This is DNA integrity scanning protein DisA from Cutibacterium acnes (strain DSM 16379 / KPA171202) (Propionibacterium acnes).